A 315-amino-acid polypeptide reads, in one-letter code: Probable cell division protein WhiA (315 aa).

Positions 280–313 (SLRELGKMLNPPVGKSGVNHRLRRIEKIADELKQ) form a DNA-binding region, H-T-H motif.

This sequence belongs to the WhiA family.

In terms of biological role, involved in cell division and chromosome segregation. This chain is Probable cell division protein WhiA, found in Clostridium botulinum (strain ATCC 19397 / Type A).